The sequence spans 225 residues: Thymidylate kinase (225 aa).

Position 10 to 17 (10 to 17) interacts with ATP; it reads GGEGAGKT.

It belongs to the thymidylate kinase family.

It carries out the reaction dTMP + ATP = dTDP + ADP. Its function is as follows. Phosphorylation of dTMP to form dTDP in both de novo and salvage pathways of dTTP synthesis. This chain is Thymidylate kinase, found in Oceanobacillus iheyensis (strain DSM 14371 / CIP 107618 / JCM 11309 / KCTC 3954 / HTE831).